The primary structure comprises 127 residues: Large ribosomal subunit protein bL12 (127 aa).

Residues 93–127 (LVDEAPNPVSEGVSREEADDLKAQIEDAGGEVELQ) form a disordered region. Positions 105-117 (VSREEADDLKAQI) are enriched in basic and acidic residues.

The protein belongs to the bacterial ribosomal protein bL12 family. As to quaternary structure, homodimer. Part of the ribosomal stalk of the 50S ribosomal subunit. Forms a multimeric L10(L12)X complex, where L10 forms an elongated spine to which 2 to 4 L12 dimers bind in a sequential fashion. Binds GTP-bound translation factors.

In terms of biological role, forms part of the ribosomal stalk which helps the ribosome interact with GTP-bound translation factors. Is thus essential for accurate translation. The protein is Large ribosomal subunit protein bL12 of Salinibacter ruber (strain DSM 13855 / M31).